We begin with the raw amino-acid sequence, 166 residues long: Interferon gamma (166 aa).

The first 23 residues, 1–23 (MKYTSYILAFQLCIILGSSSCYS), serve as a signal peptide directing secretion. Residue Gln-24 is modified to Pyrrolidone carboxylic acid. N-linked (GlcNAc...) asparagine glycans are attached at residues Asn-39, Asn-44, and Asn-106.

Belongs to the type II (or gamma) interferon family. In terms of assembly, homodimer. Released primarily from activated T lymphocytes.

It is found in the secreted. Functionally, produced by lymphocytes activated by specific antigens or mitogens. IFN-gamma, in addition to having antiviral activity, has important immunoregulatory functions. It is a potent activator of macrophages, it has antiproliferative effects on transformed cells and it can potentiate the antiviral and antitumor effects of the type I interferons. This chain is Interferon gamma (IFNG), found in Marmota monax (Woodchuck).